The sequence spans 151 residues: Ribosome maturation factor RimP (151 aa).

It belongs to the RimP family.

The protein localises to the cytoplasm. In terms of biological role, required for maturation of 30S ribosomal subunits. This chain is Ribosome maturation factor RimP, found in Pasteurella multocida (strain Pm70).